Reading from the N-terminus, the 430-residue chain is Glutamate-1-semialdehyde 2,1-aminomutase (430 aa).

At lysine 265 the chain carries N6-(pyridoxal phosphate)lysine.

The protein belongs to the class-III pyridoxal-phosphate-dependent aminotransferase family. HemL subfamily. In terms of assembly, homodimer. The cofactor is pyridoxal 5'-phosphate.

The protein localises to the cytoplasm. It catalyses the reaction (S)-4-amino-5-oxopentanoate = 5-aminolevulinate. The protein operates within porphyrin-containing compound metabolism; protoporphyrin-IX biosynthesis; 5-aminolevulinate from L-glutamyl-tRNA(Glu): step 2/2. This Shewanella baltica (strain OS155 / ATCC BAA-1091) protein is Glutamate-1-semialdehyde 2,1-aminomutase.